Consider the following 179-residue polypeptide: Large ribosomal subunit protein uL5 (179 aa).

It belongs to the universal ribosomal protein uL5 family. As to quaternary structure, part of the 50S ribosomal subunit; part of the 5S rRNA/L5/L18/L25 subcomplex. Contacts the 5S rRNA and the P site tRNA. Forms a bridge to the 30S subunit in the 70S ribosome.

In terms of biological role, this is one of the proteins that bind and probably mediate the attachment of the 5S RNA into the large ribosomal subunit, where it forms part of the central protuberance. In the 70S ribosome it contacts protein S13 of the 30S subunit (bridge B1b), connecting the 2 subunits; this bridge is implicated in subunit movement. Contacts the P site tRNA; the 5S rRNA and some of its associated proteins might help stabilize positioning of ribosome-bound tRNAs. This chain is Large ribosomal subunit protein uL5, found in Xylella fastidiosa (strain M23).